The following is a 358-amino-acid chain: Pseudouridylate synthase RPUSD4, mitochondrial (358 aa).

A mitochondrion-targeting transit peptide spans 1–12 (MRHAREVTFARL).

Belongs to the pseudouridine synthase RluA family.

It is found in the mitochondrion matrix. Its subcellular location is the nucleus. The protein localises to the cytoplasm. The catalysed reaction is uridine in 5S rRNA = pseudouridine in 5S rRNA. It catalyses the reaction a uridine in tRNA = a pseudouridine in tRNA. It carries out the reaction a uridine in mRNA = a pseudouridine in mRNA. Functionally, catalyzes uridine to pseudouridine isomerization (pseudouridylation) of different mitochondrial RNA substrates. Acts on position 1397 in 16S mitochondrial ribosomal RNA (16S mt-rRNA). This modification is required for the assembly of 16S mt-rRNA into a functional mitochondrial ribosome. Acts on position 39 in mitochondrial tRNA(Phe). Also catalyzes pseudouridylation of mRNAs in nucleus: acts as a regulator of pre-mRNA splicing by mediating pseudouridylation of pre-mRNAs at locations associated with alternatively spliced regions. Pseudouridylation of pre-mRNAs near splice sites directly regulates mRNA splicing and mRNA 3'-end processing. The protein is Pseudouridylate synthase RPUSD4, mitochondrial of Danio rerio (Zebrafish).